The following is a 207-amino-acid chain: Small ribosomal subunit protein uS4 (207 aa).

The tract at residues 31–55 (KCKLDSKPGQHGRTSGARTSDYGTQ) is disordered. A compositionally biased stretch (polar residues) spans 42–53 (GRTSGARTSDYG). One can recognise an S4 RNA-binding domain in the interval 97–160 (SRLDNVVYRM…KKQARIVEAL (64 aa)).

This sequence belongs to the universal ribosomal protein uS4 family. In terms of assembly, part of the 30S ribosomal subunit. Contacts protein S5. The interaction surface between S4 and S5 is involved in control of translational fidelity.

Functionally, one of the primary rRNA binding proteins, it binds directly to 16S rRNA where it nucleates assembly of the body of the 30S subunit. With S5 and S12 plays an important role in translational accuracy. The protein is Small ribosomal subunit protein uS4 of Burkholderia lata (strain ATCC 17760 / DSM 23089 / LMG 22485 / NCIMB 9086 / R18194 / 383).